The sequence spans 127 residues: MKDPSRSSTSPSIINEDVIINGHSHEDDNPFAEYMWMENEEEFNRQIEEELWEEEFIERCFQEMLEEEEEHEWFIPARDLPQTMDQIQDQFNDLVISDGSSLEDLVVKSNLNPNAKEFVPGVKYGNI.

A compositionally biased stretch (polar residues) spans 1–13 (MKDPSRSSTSPSI). The interval 1–24 (MKDPSRSSTSPSIINEDVIINGHS) is disordered. The segment at 22–75 (GHSHEDDNPFAEYMWMENEEEFNRQIEEELWEEEFIERCFQEMLEEEEEHEWFI) is PABPC1-interacting motif-1 (PAM1). Residues 105–120 (LVVKSNLNPNAKEFVP) are PABPC1-interacting motif-2 (PAM2).

It belongs to the PAIP2 family. In terms of assembly, interacts with the second and third RRM domains and C-terminus regions of PABPC1 in a 2:1 stoichiometry. Post-translationally, ubiquitinated, leading to its degradation by the proteasome. Expressed at highest level in testis, but also abundant in brain, cervix, lung, ovary, placenta, adipose tissue, thymus and thyroid.

It localises to the cytoplasm. Functionally, acts as a repressor in the regulation of translation initiation of poly(A)-containing mRNAs. Its inhibitory activity on translation is mediated via its action on PABPC1. Displaces the interaction of PABPC1 with poly(A) RNA and competes with PAIP1 for binding to PABPC1. Its association with PABPC1 results in disruption of the cytoplasmic poly(A) RNP structure organization. The chain is Polyadenylate-binding protein-interacting protein 2 (PAIP2) from Homo sapiens (Human).